Reading from the N-terminus, the 163-residue chain is Nucleotide-binding protein MAP_4063c (163 aa).

It belongs to the YajQ family.

Functionally, nucleotide-binding protein. The chain is Nucleotide-binding protein MAP_4063c from Mycolicibacterium paratuberculosis (strain ATCC BAA-968 / K-10) (Mycobacterium paratuberculosis).